A 37-amino-acid chain; its full sequence is MKVRPSVKKMCDKCRLIKRKGTLRVICQNPKHKQRQG.

Belongs to the bacterial ribosomal protein bL36 family.

Its subcellular location is the plastid. It localises to the chloroplast. The sequence is that of Large ribosomal subunit protein bL36c (rpl36) from Chlorella vulgaris (Green alga).